Consider the following 148-residue polypeptide: MAHLLLLHGPNLNLLGTREPEVYGRTTLAQIDAALVDRAQAAGHTLDCLQSNAEHVLVERIHAAREDGTAFILINPAAFTHTSVSLRDALLGVGLPFVEIHLSNPHTREPFRHHSYLSDKAAGVICGFGADSYRLALEAVIARLERDS.

Residue Tyr23 is the Proton acceptor of the active site. 3 residues coordinate substrate: Asn75, His81, and Asp88. The active-site Proton donor is the His101. Substrate-binding positions include 102–103 (LS) and Arg112.

It belongs to the type-II 3-dehydroquinase family. As to quaternary structure, homododecamer.

The enzyme catalyses 3-dehydroquinate = 3-dehydroshikimate + H2O. Its pathway is metabolic intermediate biosynthesis; chorismate biosynthesis; chorismate from D-erythrose 4-phosphate and phosphoenolpyruvate: step 3/7. In terms of biological role, catalyzes a trans-dehydration via an enolate intermediate. The chain is 3-dehydroquinate dehydratase from Xanthomonas campestris pv. campestris (strain 8004).